The sequence spans 671 residues: DNA ligase (671 aa).

NAD(+) is bound by residues 32-36, 81-82, and E113; these read DAEYD and SL. The N6-AMP-lysine intermediate role is filled by K115. NAD(+)-binding residues include R136, E173, K290, and K314. Residues C408, C411, C426, and C432 each contribute to the Zn(2+) site. One can recognise a BRCT domain in the interval 593 to 671; the sequence is EIDSPFAGKT…EAEMLRLLGS (79 aa).

It belongs to the NAD-dependent DNA ligase family. LigA subfamily. It depends on Mg(2+) as a cofactor. Mn(2+) serves as cofactor.

It catalyses the reaction NAD(+) + (deoxyribonucleotide)n-3'-hydroxyl + 5'-phospho-(deoxyribonucleotide)m = (deoxyribonucleotide)n+m + AMP + beta-nicotinamide D-nucleotide.. DNA ligase that catalyzes the formation of phosphodiester linkages between 5'-phosphoryl and 3'-hydroxyl groups in double-stranded DNA using NAD as a coenzyme and as the energy source for the reaction. It is essential for DNA replication and repair of damaged DNA. This is DNA ligase from Escherichia coli (strain SE11).